Consider the following 173-residue polypeptide: Crossover junction endodeoxyribonuclease RuvC (173 aa).

Catalysis depends on residues Asp-8, Glu-67, and Asp-139. Positions 8, 67, and 139 each coordinate Mg(2+).

This sequence belongs to the RuvC family. As to quaternary structure, homodimer which binds Holliday junction (HJ) DNA. The HJ becomes 2-fold symmetrical on binding to RuvC with unstacked arms; it has a different conformation from HJ DNA in complex with RuvA. In the full resolvosome a probable DNA-RuvA(4)-RuvB(12)-RuvC(2) complex forms which resolves the HJ. It depends on Mg(2+) as a cofactor.

Its subcellular location is the cytoplasm. The enzyme catalyses Endonucleolytic cleavage at a junction such as a reciprocal single-stranded crossover between two homologous DNA duplexes (Holliday junction).. Functionally, the RuvA-RuvB-RuvC complex processes Holliday junction (HJ) DNA during genetic recombination and DNA repair. Endonuclease that resolves HJ intermediates. Cleaves cruciform DNA by making single-stranded nicks across the HJ at symmetrical positions within the homologous arms, yielding a 5'-phosphate and a 3'-hydroxyl group; requires a central core of homology in the junction. The consensus cleavage sequence is 5'-(A/T)TT(C/G)-3'. Cleavage occurs on the 3'-side of the TT dinucleotide at the point of strand exchange. HJ branch migration catalyzed by RuvA-RuvB allows RuvC to scan DNA until it finds its consensus sequence, where it cleaves and resolves the cruciform DNA. This is Crossover junction endodeoxyribonuclease RuvC from Vibrio campbellii (strain ATCC BAA-1116).